The chain runs to 143 residues: Transcriptional regulator MraZ (143 aa).

SpoVT-AbrB domains follow at residues 5–47 (TFTP…PKAE) and 76–119 (ADEQ…DAES).

Belongs to the MraZ family. Forms oligomers.

The protein localises to the cytoplasm. It is found in the nucleoid. In Corynebacterium jeikeium (strain K411), this protein is Transcriptional regulator MraZ.